The sequence spans 211 residues: Large ribosomal subunit protein uL3 (211 aa).

The segment at 135-155 (THGNSLSHRAPGSIGQNQSPG) is disordered. At Gln-152 the chain carries N5-methylglutamine.

The protein belongs to the universal ribosomal protein uL3 family. Part of the 50S ribosomal subunit. Forms a cluster with proteins L14 and L19. Post-translationally, methylated by PrmB.

Its function is as follows. One of the primary rRNA binding proteins, it binds directly near the 3'-end of the 23S rRNA, where it nucleates assembly of the 50S subunit. The polypeptide is Large ribosomal subunit protein uL3 (Pseudoalteromonas translucida (strain TAC 125)).